The chain runs to 539 residues: CTP synthase (539 aa).

Positions 1–268 (MSFKSIFLTG…SDFLLNKLGF (268 aa)) are amidoligase domain. Residue S14 participates in CTP binding. S14 is a UTP binding site. ATP is bound at residue 15–20 (SLGKGL). Y55 serves as a coordination point for L-glutamine. Residue D72 participates in ATP binding. Mg(2+) is bound by residues D72 and E142. Residues 149–151 (DIE), 188–193 (KTKPTQ), and K224 each bind CTP. UTP is bound by residues 188–193 (KTKPTQ) and K224. The Glutamine amidotransferase type-1 domain occupies 294–532 (RIGLVGKYLE…IRAAKAYSLE (239 aa)). L-glutamine is bound at residue G353. C380 serves as the catalytic Nucleophile; for glutamine hydrolysis. Residues 381 to 384 (LGMQ), E404, and R460 contribute to the L-glutamine site. Catalysis depends on residues H505 and E507.

This sequence belongs to the CTP synthase family. As to quaternary structure, homotetramer.

It carries out the reaction UTP + L-glutamine + ATP + H2O = CTP + L-glutamate + ADP + phosphate + 2 H(+). The enzyme catalyses L-glutamine + H2O = L-glutamate + NH4(+). The catalysed reaction is UTP + NH4(+) + ATP = CTP + ADP + phosphate + 2 H(+). The protein operates within pyrimidine metabolism; CTP biosynthesis via de novo pathway; CTP from UDP: step 2/2. Allosterically activated by GTP, when glutamine is the substrate; GTP has no effect on the reaction when ammonia is the substrate. The allosteric effector GTP functions by stabilizing the protein conformation that binds the tetrahedral intermediate(s) formed during glutamine hydrolysis. Inhibited by the product CTP, via allosteric rather than competitive inhibition. In terms of biological role, catalyzes the ATP-dependent amination of UTP to CTP with either L-glutamine or ammonia as the source of nitrogen. Regulates intracellular CTP levels through interactions with the four ribonucleotide triphosphates. The protein is CTP synthase of Chlamydia trachomatis serovar A (strain ATCC VR-571B / DSM 19440 / HAR-13).